An 890-amino-acid chain; its full sequence is Alanine--tRNA ligase (890 aa).

Zn(2+) contacts are provided by histidine 567, histidine 571, cysteine 680, and histidine 684.

This sequence belongs to the class-II aminoacyl-tRNA synthetase family. Zn(2+) serves as cofactor.

Its subcellular location is the cytoplasm. The catalysed reaction is tRNA(Ala) + L-alanine + ATP = L-alanyl-tRNA(Ala) + AMP + diphosphate. In terms of biological role, catalyzes the attachment of alanine to tRNA(Ala) in a two-step reaction: alanine is first activated by ATP to form Ala-AMP and then transferred to the acceptor end of tRNA(Ala). Also edits incorrectly charged Ser-tRNA(Ala) and Gly-tRNA(Ala) via its editing domain. The sequence is that of Alanine--tRNA ligase from Ruegeria pomeroyi (strain ATCC 700808 / DSM 15171 / DSS-3) (Silicibacter pomeroyi).